A 102-amino-acid chain; its full sequence is Small ribosomal subunit protein uS10 (102 aa).

The tract at residues 34-58 (LSGPVPLPTKTLEIPARKSPDGEGT) is disordered.

Belongs to the universal ribosomal protein uS10 family. In terms of assembly, part of the 30S ribosomal subunit.

Involved in the binding of tRNA to the ribosomes. In Natronomonas pharaonis (strain ATCC 35678 / DSM 2160 / CIP 103997 / JCM 8858 / NBRC 14720 / NCIMB 2260 / Gabara) (Halobacterium pharaonis), this protein is Small ribosomal subunit protein uS10.